A 209-amino-acid polypeptide reads, in one-letter code: Large ribosomal subunit protein uL3 (209 aa).

Positions 133–153 (THGNSLSHRAPGSIGQNQTPG) are disordered. Residue Q150 is modified to N5-methylglutamine.

The protein belongs to the universal ribosomal protein uL3 family. In terms of assembly, part of the 50S ribosomal subunit. Forms a cluster with proteins L14 and L19. Methylated by PrmB.

Its function is as follows. One of the primary rRNA binding proteins, it binds directly near the 3'-end of the 23S rRNA, where it nucleates assembly of the 50S subunit. In Pectobacterium atrosepticum (strain SCRI 1043 / ATCC BAA-672) (Erwinia carotovora subsp. atroseptica), this protein is Large ribosomal subunit protein uL3.